Here is a 293-residue protein sequence, read N- to C-terminus: Extracellular metalloprotease MGYG_00389 (293 aa).

The signal sequence occupies residues 1 to 19; that stretch reads MRFSVFLPAIAALSSAVAA. N-linked (GlcNAc...) asparagine glycosylation is found at asparagine 49 and asparagine 53. Residue histidine 184 participates in Zn(2+) binding. Glutamate 185 is a catalytic residue. Histidine 188 contributes to the Zn(2+) binding site. A disulfide bridge connects residues cysteine 223 and cysteine 249. The segment at 270 to 293 is disordered; it reads GSGSGSVTRPRPKPPVLMDYEHRL.

This sequence belongs to the peptidase M43B family.

The protein localises to the secreted. In terms of biological role, secreted metalloproteinase that allows assimilation of proteinaceous substrates. Plays a pivotal role as a pathogenicity determinant during infections and contributes to the ability of the pathogen to persist within the mammalian host. This Arthroderma gypseum (strain ATCC MYA-4604 / CBS 118893) (Microsporum gypseum) protein is Extracellular metalloprotease MGYG_00389.